Consider the following 544-residue polypeptide: Serine/threonine-protein kinase bur1 (544 aa).

The 302-residue stretch at 25–326 folds into the Protein kinase domain; sequence FEFLGKLGEG…AIDALKHPYF (302 aa). ATP-binding positions include 31–39 and Lys-54; that span reads LGEGTFGEV. Asp-155 (proton acceptor) is an active-site residue. A disordered region spans residues 357-544; that stretch reads AAMPPAPAGG…ERVDRGPYRR (188 aa). Polar residues predominate over residues 374–403; it reads GGWSTNSGSRTGAETRNPRISSAARSQGNQ. 4 stretches are compositionally biased toward basic and acidic residues: residues 419-438, 456-466, 488-511, and 532-544; these read RGNE…HRDG, HSDKTGRDRGY, DRNR…DKSH, and NYRE…PYRR.

It belongs to the protein kinase superfamily. CMGC Ser/Thr protein kinase family. CDC2/CDKX subfamily.

It is found in the nucleus. It carries out the reaction L-seryl-[protein] + ATP = O-phospho-L-seryl-[protein] + ADP + H(+). The enzyme catalyses L-threonyl-[protein] + ATP = O-phospho-L-threonyl-[protein] + ADP + H(+). It catalyses the reaction [DNA-directed RNA polymerase] + ATP = phospho-[DNA-directed RNA polymerase] + ADP + H(+). Serine/threonine-protein kinase involved in transcription regulation. Phosphorylates the UBC2/RAD6 ubiquitin-conjugating enzyme (E2), leading to monoubiquitination of histone H2B and the silencing of telomeric-associated genes. Also required for histone H3 methylation. Necessary for the recovery from pheromone-induced growth arrest in the cell cycle G1 phase. This is Serine/threonine-protein kinase bur1 (ptkA) from Emericella nidulans (strain FGSC A4 / ATCC 38163 / CBS 112.46 / NRRL 194 / M139) (Aspergillus nidulans).